Here is a 95-residue protein sequence, read N- to C-terminus: Co-chaperonin GroES (95 aa).

Over residues 12–22 the composition is skewed to basic and acidic residues; the sequence is VKPSPAEEKTK. Residues 12 to 38 form a disordered region; sequence VKPSPAEEKTKGGLYIPDSGKEKPQHG.

It belongs to the GroES chaperonin family. In terms of assembly, heptamer of 7 subunits arranged in a ring. Interacts with the chaperonin GroEL.

It is found in the cytoplasm. Functionally, together with the chaperonin GroEL, plays an essential role in assisting protein folding. The GroEL-GroES system forms a nano-cage that allows encapsulation of the non-native substrate proteins and provides a physical environment optimized to promote and accelerate protein folding. GroES binds to the apical surface of the GroEL ring, thereby capping the opening of the GroEL channel. The polypeptide is Co-chaperonin GroES (Chloroherpeton thalassium (strain ATCC 35110 / GB-78)).